The following is a 503-amino-acid chain: V-type proton ATPase subunit B (503 aa).

R378 serves as a coordination point for ATP. 4 positions are modified to phosphoserine: S491, S492, S502, and S503.

This sequence belongs to the ATPase alpha/beta chains family. As to quaternary structure, V-ATPase is a heteromultimeric enzyme composed of a peripheral catalytic V1 complex (components A to H) attached to an integral membrane V0 proton pore complex (components: a, c, c', c'', d, e, f and VOA1). Interacts with rav1.

Its subcellular location is the vacuole membrane. Functionally, non-catalytic subunit of the V1 complex of vacuolar(H+)-ATPase (V-ATPase), a multisubunit enzyme composed of a peripheral complex (V1) that hydrolyzes ATP and a membrane integral complex (V0) that translocates protons. V-ATPase is responsible for acidifying and maintaining the pH of intracellular compartments. In Schizosaccharomyces pombe (strain 972 / ATCC 24843) (Fission yeast), this protein is V-type proton ATPase subunit B.